Here is a 118-residue protein sequence, read N- to C-terminus: Large ribosomal subunit protein bL20 (118 aa).

It belongs to the bacterial ribosomal protein bL20 family.

In terms of biological role, binds directly to 23S ribosomal RNA and is necessary for the in vitro assembly process of the 50S ribosomal subunit. It is not involved in the protein synthesizing functions of that subunit. In Gluconobacter oxydans (strain 621H) (Gluconobacter suboxydans), this protein is Large ribosomal subunit protein bL20.